The primary structure comprises 67 residues: Beta-defensin 103A (67 aa).

The signal sequence occupies residues Met-1 to Gly-22. 3 disulfides stabilise this stretch: Cys-33–Cys-62, Cys-40–Cys-55, and Cys-45–Cys-63.

It belongs to the beta-defensin family.

The protein localises to the secreted. In terms of biological role, exhibits antimicrobial activity against Gram-positive and Gram-negative bacteria. The protein is Beta-defensin 103A (DEFB103A) of Equus caballus (Horse).